An 86-amino-acid chain; its full sequence is CRISPR-associated endoribonuclease Cas2 (86 aa).

D8 is a binding site for Mg(2+).

It belongs to the CRISPR-associated endoribonuclease Cas2 protein family. Homodimer, forms a heterotetramer with a Cas1 homodimer. The cofactor is Mg(2+).

In terms of biological role, CRISPR (clustered regularly interspaced short palindromic repeat), is an adaptive immune system that provides protection against mobile genetic elements (viruses, transposable elements and conjugative plasmids). CRISPR clusters contain sequences complementary to antecedent mobile elements and target invading nucleic acids. CRISPR clusters are transcribed and processed into CRISPR RNA (crRNA). Functions as a ssRNA-specific endoribonuclease. Involved in the integration of spacer DNA into the CRISPR cassette. Plasmid targeted by CRISPR locus P1 transform wild-type cells very poorly. The protein is CRISPR-associated endoribonuclease Cas2 of Haloferax volcanii (strain ATCC 29605 / DSM 3757 / JCM 8879 / NBRC 14742 / NCIMB 2012 / VKM B-1768 / DS2) (Halobacterium volcanii).